The chain runs to 512 residues: Cytochrome P450 monooxygenase poxM (512 aa).

A helical transmembrane segment spans residues Leu15–Ile35. Cys449 contributes to the heme binding site.

The protein belongs to the cytochrome P450 family. Requires heme as cofactor.

Its subcellular location is the membrane. It participates in secondary metabolite biosynthesis. Functionally, cytochrome P450 monooxygenase; part of the gene cluster that mediates the biosynthesis of oxaleimides, cytotoxic compounds containing an unusual disubstituted succinimide moiety. The first step of the pathway is provided by the HR-PKS poxF that serves in a new mode of collaborative biosynthesis with the PKS-NRPS poxE, by providing the olefin containing amino acid substrate via the synthesis of an ACP-bound dec-4-enoate. The cytochrome P450 monooxygenase poxM-catalyzed oxidation at the alpha-position creates the enzyme-bound 2-hydroxydec-4-enoyl-ACP thioester, which may be prone to spontaneous hydrolysis to yield 2-hydroxydec-4-enoic acid due to increased electrophilicity of the carbonyl. 2-hydroxydec-4-enoic acid can then be further oxidized by poxM to yield the alpha-ketoacid 2-oxodec-4-enoicacid, which is reductively aminated by the aminotransferase poxL to yield (S,E)-2-aminodec-4-enoic acid. The Hybrid PKS-NRPS synthetase poxE then performs condensation between the octaketide product of its PKS modules and the amino group of (S,E)-2-aminodec-4-enoic acid which is activated and incorporated by the adenylation domain. The resulting aminoacyl product can be cyclized by the Diels-Alderase PoxQ and reductively released by the reductive (R) domain of poxE to yield an aldehyde intermediate. The released aldehyde is then substrate for a Knoevenagel condensation by the hydrolyase poxO followed by an oxidation at the 5-position of the pyrrolidone ring. The presence of the olefin from the amino acid building block allows for migration of the substituted allyl group to occur. This allylic transposition reaction takes place in a conjugate addition, semipinacol-like fashion to yield a succinimide intermediate. Iterative two-electron oxidations of the C7 methyl of the succinimide intermediate to the carboxylic acid can be catalyzed by one of two remaining cytochrome P450 monooxygenasess poxC or poxD to yield oxaleimide A. Subsequent oxidation yields the maleimide scaffold oxaleimide I. Both oxaleimide A and oxaleimide I can undergo oxidative modifications in the decalin ring to yield the series of products oxaleimides B to H. The sequence is that of Cytochrome P450 monooxygenase poxM from Penicillium oxalicum (strain 114-2 / CGMCC 5302) (Penicillium decumbens).